We begin with the raw amino-acid sequence, 148 residues long: Leghemoglobin-1 (148 aa).

A Globin domain is found at 2-146; it reads GFTDKQEALV…LATAIKKAMK (145 aa). Nitrated tyrosine occurs at positions 24 and 29. S44 is a binding site for heme b. Residue S44 is modified to Phosphoserine. H61 is an O2 binding site. Residues H93 and K96 each contribute to the heme b site. Y134 is modified (nitrated tyrosine).

The protein belongs to the plant globin family. As to quaternary structure, monomer. Post-translationally, nitrated in effective nodules and particularly in hypoxic conditions; this mechanism may play a protective role in the symbiosis by buffering toxic peroxynitrite NO(2)(-). Nitration level decrease during nodule senescence. In terms of processing, phosphorylation at Ser-44 disrupts the molecular environment of its porphyrin ring oxygen binding pocket, thus leading to a reduced oxygen consumption and to the delivery of oxygen O(2) to symbiosomes. As to expression, root nodules.

It is found in the cytoplasm. It localises to the cytosol. The protein resides in the nucleus. Leghemoglobin that reversibly binds oxygen O(2) through a pentacoordinated heme iron. In root nodules, facilitates the diffusion of oxygen to the bacteroids while preventing the bacterial nitrogenase from being inactivated by buffering dioxygen, nitric oxide and carbon monoxide, and promoting the formation of reactive oxygen species (ROS, e.g. H(2)O(2)). This role is essential for symbiotic nitrogen fixation (SNF). The sequence is that of Leghemoglobin-1 from Pisum sativum (Garden pea).